Here is a 496-residue protein sequence, read N- to C-terminus: Glycerol kinase (496 aa).

Threonine 14 provides a ligand contact to ADP. ATP-binding residues include threonine 14 and threonine 15. Threonine 14 serves as a coordination point for sn-glycerol 3-phosphate. 4 residues coordinate sn-glycerol 3-phosphate: arginine 84, glutamate 85, tyrosine 136, and aspartate 246. Glycerol contacts are provided by arginine 84, glutamate 85, tyrosine 136, aspartate 246, and glutamine 247. Residues threonine 268 and glycine 313 each contribute to the ADP site. ATP contacts are provided by threonine 268, glycine 313, glutamine 317, and glycine 414. Glycine 414 and asparagine 418 together coordinate ADP.

This sequence belongs to the FGGY kinase family.

The enzyme catalyses glycerol + ATP = sn-glycerol 3-phosphate + ADP + H(+). Its pathway is polyol metabolism; glycerol degradation via glycerol kinase pathway; sn-glycerol 3-phosphate from glycerol: step 1/1. Inhibited by fructose 1,6-bisphosphate (FBP). Functionally, key enzyme in the regulation of glycerol uptake and metabolism. Catalyzes the phosphorylation of glycerol to yield sn-glycerol 3-phosphate. This chain is Glycerol kinase, found in Myxococcus xanthus (strain DK1622).